A 371-amino-acid chain; its full sequence is Cytochrome b (371 aa).

4 helical membrane-spanning segments follow: residues 25 to 45 (FGSL…FLAI), 69 to 90 (WIMQ…YTHI), 105 to 125 (WLSG…GYVL), and 170 to 190 (FFAL…IHII). Heme b contacts are provided by histidine 75 and histidine 89. Heme b contacts are provided by histidine 174 and histidine 188. Histidine 193 lines the a ubiquinone pocket. The next 4 helical transmembrane spans lie at 218–238 (YKDM…MTFA), 280–300 (LGGT…PFTH), 312–332 (LTQI…WTAT), and 339–358 (FIYI…IMNP).

The protein belongs to the cytochrome b family. In terms of assembly, the cytochrome bc1 complex contains 3 respiratory subunits (MT-CYB, CYC1 and UQCRFS1), 2 core proteins (UQCRC1 and UQCRC2) and probably 6 low-molecular weight proteins. The cofactor is heme b.

The protein localises to the mitochondrion inner membrane. Functionally, component of the ubiquinol-cytochrome c reductase complex (complex III or cytochrome b-c1 complex) that is part of the mitochondrial respiratory chain. The b-c1 complex mediates electron transfer from ubiquinol to cytochrome c. Contributes to the generation of a proton gradient across the mitochondrial membrane that is then used for ATP synthesis. In Micruroides euryxanthus (Sonoran coral snake), this protein is Cytochrome b (MT-CYB).